Reading from the N-terminus, the 259-residue chain is Protein-L-isoaspartate O-methyltransferase (259 aa).

The segment at 1 to 25 (MRKRVDPPAGGRLAPGITPANSNTR) is disordered. Residue S107 is part of the active site.

Belongs to the methyltransferase superfamily. L-isoaspartyl/D-aspartyl protein methyltransferase family.

It is found in the cytoplasm. The catalysed reaction is [protein]-L-isoaspartate + S-adenosyl-L-methionine = [protein]-L-isoaspartate alpha-methyl ester + S-adenosyl-L-homocysteine. In terms of biological role, catalyzes the methyl esterification of L-isoaspartyl residues in peptides and proteins that result from spontaneous decomposition of normal L-aspartyl and L-asparaginyl residues. It plays a role in the repair and/or degradation of damaged proteins. The sequence is that of Protein-L-isoaspartate O-methyltransferase from Bordetella bronchiseptica (strain ATCC BAA-588 / NCTC 13252 / RB50) (Alcaligenes bronchisepticus).